The primary structure comprises 805 residues: MKFTLSWLKDHLETEAPLDEIVTALTDLGHEVEGVEDPVKVLGAFRICRVIEAQPHPNADRLRLCRVATWPNGPDAPSEEVQVVCGAPNARTGLVGVFAPVGTHVPGTGVDLKPGVIRGVESNGMLCSERELMLSDDHDGIIDLPEDAPMGMRFIDYKGVNDPTIEVKITPNRPDGLGVRGLARDLAARGLGRLKPLPVEPVPGLFPSPVSVTIEAALKEKGCPLFAGRTIRGVKNGPSPDWLQARLRSVGLRPISALVDITNYFTIGLNRPLHVFDVAKITGGLRIHAAEGGEELLALDGKTYKLRPGQMLISDDAQPESLAGIMGGELSGCTEETTDVFLESAYWDPITIAATGRALKIVSDARYRFERGVDPAFTLPGLELATRMILDLCGGEASEVVMDGAVPDTSRAYRFDPKRVVSLVGMEIPEAEQRTTLEALGFTLEGELAAPPSWRPDVQGEADLVEEIARVASLTKLQGKPLPRAQAGVPKPILTPLQVREQAARRTLAALGYNECVTYSFIDEAAAKLFGGGSEAVRVENPISSEMTHLRPDLLPGLLRAAARNQARGFADMALCEIGPVFAGGEPGEQQLQATGLLVGASAPRDPFGSRRPVDVYDAKADAEAVLAAVGAPAKMQISRKVPGWWHPGRSGAVGLGPNLLATFGEVHPKILREMDVKGPAVAFTILVANVPLPKVKTPTRPALKLSDLQAVERDFAFVVDASVEALTLVNAAQGADKALIESVRVFDQFSGDKAEAQMGAGKKSLALTVRLQPTDRTLTDKDIEAVSAKIVEKVAKATGATLRG.

The 117-residue stretch at 39–155 folds into the tRNA-binding domain; the sequence is VKVLGAFRIC…EDAPMGMRFI (117 aa). One can recognise a B5 domain in the interval 408–479; that stretch reads DTSRAYRFDP…RVASLTKLQG (72 aa). Aspartate 457, aspartate 463, glutamate 466, and glutamate 467 together coordinate Mg(2+). The region spanning 707–804 is the FDX-ACB domain; the sequence is SDLQAVERDF…VAKATGATLR (98 aa).

Belongs to the phenylalanyl-tRNA synthetase beta subunit family. Type 1 subfamily. As to quaternary structure, tetramer of two alpha and two beta subunits. The cofactor is Mg(2+).

The protein resides in the cytoplasm. It catalyses the reaction tRNA(Phe) + L-phenylalanine + ATP = L-phenylalanyl-tRNA(Phe) + AMP + diphosphate + H(+). In Cereibacter sphaeroides (strain ATCC 17023 / DSM 158 / JCM 6121 / CCUG 31486 / LMG 2827 / NBRC 12203 / NCIMB 8253 / ATH 2.4.1.) (Rhodobacter sphaeroides), this protein is Phenylalanine--tRNA ligase beta subunit.